A 215-amino-acid chain; its full sequence is Golgi-associated RAB2 interactor protein 5A (215 aa).

Disordered regions lie at residues 1-20 and 174-215; these read MKRGHEPKPAFGGAGEAGPG and QDYS…LWGL. Acidic residues predominate over residues 178 to 191; that stretch reads ALEDDEDDDEDEDR.

It belongs to the GARIN family. As to quaternary structure, interacts (via N-terminus) with RAB2B (in GTP-bound form).

The protein resides in the golgi apparatus. Functionally, RAB2B effector protein which promotes cytosolic DNA-induced innate immune responses. Regulates IFN responses against DNA viruses by regulating the CGAS-STING signaling axis. This Bos taurus (Bovine) protein is Golgi-associated RAB2 interactor protein 5A (GARIN5A).